The following is a 148-amino-acid chain: 2S seed storage protein 1 (148 aa).

Residues 1 to 19 (MARFTIVLAVLFAAALVSA) form the signal peptide. The propeptide occupies 20 to 38 (SAHKTVVTTSVAEEGEEEN). The segment at 24–94 (TVVTTSVAEE…ECCNELRDVK (71 aa)) is involved in IgE-binding. 4 disulfides stabilise this stretch: Cys42/Cys97, Cys54/Cys86, Cys87/Cys133, and Cys99/Cys141. 3 immunodominant epitope; binds to IgE of 14 patients out of 15 tested regions span residues 46–55 (SRQCQMRHCM), 48–57 (QCQMRHCMQW), and 76–86 (NQGQFEHFREC). A propeptide spanning residues 69–76 (FLRSAEAN) is cleaved from the precursor. Positions 147 to 148 (FA) are excised as a propeptide.

It belongs to the 2S seed storage albumins family. In terms of assembly, the mature protein consists of a small and a large chain linked by disulfide bonds. As to expression, expressed in seeds (at protein level).

Seed storage protein. The polypeptide is 2S seed storage protein 1 (Sesamum indicum (Oriental sesame)).